The following is a 171-amino-acid chain: 3-hydroxydecanoyl-[acyl-carrier-protein] dehydratase (171 aa).

The active site involves His70.

The protein belongs to the thioester dehydratase family. FabA subfamily. As to quaternary structure, homodimer.

Its subcellular location is the cytoplasm. The catalysed reaction is a (3R)-hydroxyacyl-[ACP] = a (2E)-enoyl-[ACP] + H2O. It catalyses the reaction (3R)-hydroxydecanoyl-[ACP] = (2E)-decenoyl-[ACP] + H2O. The enzyme catalyses (2E)-decenoyl-[ACP] = (3Z)-decenoyl-[ACP]. The protein operates within lipid metabolism; fatty acid biosynthesis. In terms of biological role, necessary for the introduction of cis unsaturation into fatty acids. Catalyzes the dehydration of (3R)-3-hydroxydecanoyl-ACP to E-(2)-decenoyl-ACP and then its isomerization to Z-(3)-decenoyl-ACP. Can catalyze the dehydratase reaction for beta-hydroxyacyl-ACPs with saturated chain lengths up to 16:0, being most active on intermediate chain length. In Shewanella oneidensis (strain ATCC 700550 / JCM 31522 / CIP 106686 / LMG 19005 / NCIMB 14063 / MR-1), this protein is 3-hydroxydecanoyl-[acyl-carrier-protein] dehydratase.